Reading from the N-terminus, the 89-residue chain is Acylphosphatase (89 aa).

Positions 3–89 constitute an Acylphosphatase-like domain; sequence ALFIKISGRV…QNFTSFDIVP (87 aa). Active-site residues include Arg18 and Asn36.

The protein belongs to the acylphosphatase family.

It carries out the reaction an acyl phosphate + H2O = a carboxylate + phosphate + H(+). In Pseudothermotoga lettingae (strain ATCC BAA-301 / DSM 14385 / NBRC 107922 / TMO) (Thermotoga lettingae), this protein is Acylphosphatase (acyP).